Reading from the N-terminus, the 767-residue chain is Slo-interacting protein 1 (767 aa).

Positions 202–280 (QQSSTDTNKG…SVTLLVSRIL (79 aa)) constitute a PDZ domain. 2 disordered regions span residues 521–557 (GNAAAPGEEVDNSSSAYNTGDSNNSASPHQNTTNPDE) and 744–767 (KEERKRHIERAREKRHHQTQQQQQ). Over residues 532–555 (NSSSAYNTGDSNNSASPHQNTTNP) the composition is skewed to polar residues. A compositionally biased stretch (basic and acidic residues) spans 744–755 (KEERKRHIERAR).

Interacts with Slo. In embryos, it is expressed throughout the CNS and in several peripheral locations. Colocalizes with Slo.

In terms of biological role, may selectively reduce calcium-activated potassium channel (Slo) currents by reducing the number of Slo channels in the plasma membrane. This Drosophila melanogaster (Fruit fly) protein is Slo-interacting protein 1 (Slip1).